A 41-amino-acid polypeptide reads, in one-letter code: Plantazolicin (41 aa).

Positions 1–27 are excised as a propeptide; sequence MTKITIPTALSAKVHGEGQHLFEPMAA. Residue arginine 28 is modified to N2,N2-dimethylarginine; in form plantazolicin A. Residues 28-29 constitute a cross-link (thiazole-4-carboxylic acid (Arg-Cys)); it reads RC. 2 cross-links (5-methyloxazole-4-carboxylic acid (Cys-Thr)) span residues 29-30 and 31-32; these read CT. The segment at residues 30-31 is a cross-link (thiazole-4-carboxylic acid (Thr-Cys)); sequence TC. The segment at residues 32 to 33 is a cross-link (5-methyloxazole-4-carboxylic acid (Thr-Thr)); the sequence is TT. Residues 35-36 constitute a cross-link (oxazole-4-carboxylic acid (Ile-Ser)); that stretch reads IS. 3 cross-links (oxazole-4-carboxylic acid (Ser-Ser)) span residues 36–37, 37–38, and 38–39; these read SS. The 5-methyloxazoline-4-carboxylic acid (Ser-Thr) cross-link spans 39 to 40; it reads ST.

In terms of processing, maturation of thiazole and oxazole containing antibiotics involves the enzymatic condensation of a Cys, Ser or Thr with the alpha-carbonyl of the preceding amino acid to form a thioether or ether bond, then dehydration to form a double bond with the alpha-amino nitrogen. Thiazoline or oxazoline ring are dehydrogenated to form thiazole or oxazole rings.

It localises to the secreted. Its subcellular location is the cell wall. Peptide antibiotic inhibiting growth of Gram-positive bacteria. The mode of action appears to be disruption of cell walls and lysis of cells. This is Plantazolicin from Bacillus pumilus (strain ATCC 7061 / DSM 27 / CCUG 26015 / JCM 2508 / NBRC 12092 / NCIMB 9369 / NCTC 10337 / NRRL NRS-272 / CCM 2144).